Reading from the N-terminus, the 204-residue chain is MTDNLQLTQLVETCRWIGAKGWAPATGGNMSVRQDDAFCWLSESGKDKGNLTTDDFLQVEIATSHAPSGRKPSAETGLHTLIYHLFPQANAVLHVHTANATVLSRIVKTPELYISGFEMQKSLSGQTTHLDTVCVPVFDNDQDIDALASRIAHYAQERSLNYGFLLRGHGLTCWGRSVEEARRHLEGLEFLFECEMRLRQLERL.

Zn(2+)-binding residues include H94 and H96.

It belongs to the aldolase class II family. MtnB subfamily. Requires Zn(2+) as cofactor.

It carries out the reaction 5-(methylsulfanyl)-D-ribulose 1-phosphate = 5-methylsulfanyl-2,3-dioxopentyl phosphate + H2O. Its pathway is amino-acid biosynthesis; L-methionine biosynthesis via salvage pathway; L-methionine from S-methyl-5-thio-alpha-D-ribose 1-phosphate: step 2/6. Functionally, catalyzes the dehydration of methylthioribulose-1-phosphate (MTRu-1-P) into 2,3-diketo-5-methylthiopentyl-1-phosphate (DK-MTP-1-P). The sequence is that of Methylthioribulose-1-phosphate dehydratase from Citrobacter koseri (strain ATCC BAA-895 / CDC 4225-83 / SGSC4696).